The primary structure comprises 147 residues: uncharacterized protein (147 aa).

A compositionally biased stretch (low complexity) spans 72–81; sequence ARAKPASRAP. Residues 72–147 form a disordered region; sequence ARAKPASRAP…QGAAGRRLSP (76 aa).

This is an uncharacterized protein from Homo sapiens (Human).